Consider the following 793-residue polypeptide: Ribosome biogenesis protein BOP1 homolog (793 aa).

A compositionally biased stretch (basic residues) spans 1–11; sequence MTKKLTLKRKG. The segment at 1 to 168 is disordered; that stretch reads MTKKLTLKRK…DSDTSDEEDI (168 aa). Acidic residues-rich tracts occupy residues 44-53, 60-72, and 83-116; these read EDTTDDEGID, SSED…DEEG, and SSEE…DGDE. Residues 117–129 show a composition bias toward basic and acidic residues; that stretch reads EKPTTSKQNKSED. The span at 133–143 shows a compositional bias: polar residues; it reads SSKVSKKTQPP. Residues 146–161 are compositionally biased toward basic and acidic residues; sequence DLVKRDPSHPEYHDSD. WD repeat units lie at residues 454–495, 497–535, 579–621, 624–662, 665–704, 708–747, and 763–793; these read GHTD…RTIE, EDVV…KVLV, NHFK…SQIP, KSKG…LVKK, TNSK…KPYQ, LHRN…DLLQ, and REDF…RLYT.

This sequence belongs to the WD repeat BOP1/ERB1 family.

The protein localises to the nucleus. The protein resides in the nucleolus. Its subcellular location is the nucleoplasm. Functionally, required for maturation of ribosomal RNAs and formation of the large ribosomal subunit. The chain is Ribosome biogenesis protein BOP1 homolog from Drosophila ananassae (Fruit fly).